We begin with the raw amino-acid sequence, 209 residues long: Adenylate kinase (209 aa).

Position 10-15 (10-15 (GAGKGT)) interacts with ATP. Positions 30 to 59 (STGDLFRAAIKEQTDLGKKVKAVIDSGALV) are NMP. AMP contacts are provided by residues Thr31, Arg36, 57 to 59 (ALV), 85 to 88 (GFPR), and Gln92. The tract at residues 121 to 158 (GRRVCSSCGQSFHIEFVKPKKEGICDSCSGDLMIRPDD) is LID. Position 122 (Arg122) interacts with ATP. The Zn(2+) site is built by Cys125 and Cys128. 131-132 (SF) provides a ligand contact to ATP. Zn(2+)-binding residues include Cys145 and Cys148. Residues Arg155 and Arg166 each contribute to the AMP site. ATP is bound at residue Pro194.

It belongs to the adenylate kinase family. In terms of assembly, monomer.

It is found in the cytoplasm. The enzyme catalyses AMP + ATP = 2 ADP. It functions in the pathway purine metabolism; AMP biosynthesis via salvage pathway; AMP from ADP: step 1/1. Functionally, catalyzes the reversible transfer of the terminal phosphate group between ATP and AMP. Plays an important role in cellular energy homeostasis and in adenine nucleotide metabolism. This chain is Adenylate kinase, found in Treponema denticola (strain ATCC 35405 / DSM 14222 / CIP 103919 / JCM 8153 / KCTC 15104).